We begin with the raw amino-acid sequence, 528 residues long: Protein WHAT'S THIS FACTOR 1 homolog, chloroplastic (528 aa).

The N-terminal 73 residues, 1 to 73 (MEPKLLLSAH…KTRVVVEPVR (73 aa)), are a transit peptide targeting the chloroplast. Residues 80–408 (KELTFDSVVQ…VKEKMRALVS (329 aa)) enclose the PORR domain. The tract at residues 410–528 (PRFPRRGGPR…FPDGTPREKW (119 aa)) is disordered. Positions 418 to 428 (PRKDEEGREVE) are enriched in basic and acidic residues. Residues 429–491 (IDGSDADGEE…DDDDEDEEED (63 aa)) are compositionally biased toward acidic residues.

Its subcellular location is the plastid. It localises to the chloroplast. Functionally, RNA-binding protein involved in group II intron splicing. Binds specific group II introns and promotes their splicing. Functions in the context of a heterodimer with the ribonuclease III domain-containing protein RNC1. The protein is Protein WHAT'S THIS FACTOR 1 homolog, chloroplastic of Arabidopsis thaliana (Mouse-ear cress).